The chain runs to 123 residues: Small ribosomal subunit protein bS16 (123 aa).

Residues 87–123 (VKNNPVKAKPGKRAQERAAEKAQKVADAAAAAADAAE) form a disordered region. Residues 99-110 (RAQERAAEKAQK) are compositionally biased toward basic and acidic residues. The span at 111–123 (VADAAAAAADAAE) shows a compositional bias: low complexity.

Belongs to the bacterial ribosomal protein bS16 family.

This chain is Small ribosomal subunit protein bS16, found in Rhizobium johnstonii (strain DSM 114642 / LMG 32736 / 3841) (Rhizobium leguminosarum bv. viciae).